A 163-amino-acid chain; its full sequence is Lipoprotein signal peptidase (163 aa).

4 helical membrane passes run 9-29 (AWPW…SKYL), 42-62 (ILPF…SFLG), 67-87 (WQII…ILWL), and 93-113 (SEIM…GNFI). Residues aspartate 123 and aspartate 141 contribute to the active site. The chain crosses the membrane as a helical span at residues 137 to 157 (FNVADSAICVGVFLLIVYMLL).

It belongs to the peptidase A8 family.

The protein resides in the cell inner membrane. It catalyses the reaction Release of signal peptides from bacterial membrane prolipoproteins. Hydrolyzes -Xaa-Yaa-Zaa-|-(S,diacylglyceryl)Cys-, in which Xaa is hydrophobic (preferably Leu), and Yaa (Ala or Ser) and Zaa (Gly or Ala) have small, neutral side chains.. Its pathway is protein modification; lipoprotein biosynthesis (signal peptide cleavage). Functionally, this protein specifically catalyzes the removal of signal peptides from prolipoproteins. This Coxiella burnetii (strain Dugway 5J108-111) protein is Lipoprotein signal peptidase.